The sequence spans 407 residues: F-box protein SKIP23 (407 aa).

The F-box domain maps to 2 to 50; it reads VDWSTLPKDLLDLISKSLESSFDLIQFRSVCSSWRSAAEPKSPLPTHHL.

Part of a SCF (ASK-cullin-F-box) protein ligase complex. Interacts with SKP1A/ASK1.

It is found in the nucleus. Its pathway is protein modification; protein ubiquitination. Its function is as follows. Component of SCF(ASK-cullin-F-box) E3 ubiquitin ligase complexes, which may mediate the ubiquitination and subsequent proteasomal degradation of target proteins. The chain is F-box protein SKIP23 (SKIP23) from Arabidopsis thaliana (Mouse-ear cress).